The following is a 328-amino-acid chain: GATA transcription factor 17 (328 aa).

The disordered stretch occupies residues 1–68 (MSGHHEAKPY…EEYEGGEGVP (68 aa)). The segment covering 14–29 (RGPAPADEEAAPAAAA) has biased composition (low complexity). Composition is skewed to acidic residues over residues 30-39 (DEAEAEAEVE) and 47-63 (EQEY…EYEG). The Tify domain maps to 100-135 (PHVASNTLTLSFQGEVYVFESVSAERVQAVLLLLGG). The 43-residue stretch at 161-203 (RMASLMRFREKRKERNFDKKIRYTVRKEVALRMQRNRGQFTSS) folds into the CCT domain. Positions 198 to 231 (GQFTSSKSKAEEATSVITSSEGSPNWGAVEGRPP) are disordered. The GATA-type zinc-finger motif lies at 236–263 (CHHCGISAASTPMMRRGPDGPRTLCNAC).

Belongs to the type IV zinc-finger family. Class C subfamily.

Its subcellular location is the nucleus. Functionally, transcriptional activator that specifically binds 5'-GATA-3' or 5'-GAT-3' motifs within gene promoters. This is GATA transcription factor 17 from Oryza sativa subsp. japonica (Rice).